A 255-amino-acid polypeptide reads, in one-letter code: Pyrroloquinoline-quinone synthase (255 aa).

The protein belongs to the PqqC family.

The enzyme catalyses 6-(2-amino-2-carboxyethyl)-7,8-dioxo-1,2,3,4,7,8-hexahydroquinoline-2,4-dicarboxylate + 3 O2 = pyrroloquinoline quinone + 2 H2O2 + 2 H2O + H(+). It functions in the pathway cofactor biosynthesis; pyrroloquinoline quinone biosynthesis. Functionally, ring cyclization and eight-electron oxidation of 3a-(2-amino-2-carboxyethyl)-4,5-dioxo-4,5,6,7,8,9-hexahydroquinoline-7,9-dicarboxylic-acid to PQQ. This Acinetobacter baylyi (strain ATCC 33305 / BD413 / ADP1) protein is Pyrroloquinoline-quinone synthase.